The primary structure comprises 638 residues: 1-deoxy-D-xylulose-5-phosphate synthase (638 aa).

Thiamine diphosphate contacts are provided by residues His75 and 116-118 (AHS). Asp147 serves as a coordination point for Mg(2+). Thiamine diphosphate-binding positions include 148–149 (GA), Asn177, Tyr288, and Glu370. Asn177 contributes to the Mg(2+) binding site.

The protein belongs to the transketolase family. DXPS subfamily. Homodimer. The cofactor is Mg(2+). Requires thiamine diphosphate as cofactor.

The enzyme catalyses D-glyceraldehyde 3-phosphate + pyruvate + H(+) = 1-deoxy-D-xylulose 5-phosphate + CO2. The protein operates within metabolic intermediate biosynthesis; 1-deoxy-D-xylulose 5-phosphate biosynthesis; 1-deoxy-D-xylulose 5-phosphate from D-glyceraldehyde 3-phosphate and pyruvate: step 1/1. Catalyzes the acyloin condensation reaction between C atoms 2 and 3 of pyruvate and glyceraldehyde 3-phosphate to yield 1-deoxy-D-xylulose-5-phosphate (DXP). The chain is 1-deoxy-D-xylulose-5-phosphate synthase from Cupriavidus pinatubonensis (strain JMP 134 / LMG 1197) (Cupriavidus necator (strain JMP 134)).